A 385-amino-acid polypeptide reads, in one-letter code: Succinate--CoA ligase [ADP-forming] subunit beta (385 aa).

The ATP-grasp domain maps to 9-237; that stretch reads KEILRQFGVN…LEAEHPLEIE (229 aa). ATP-binding positions include K45, 52 to 54, V94, and E101; that span reads GRG. Mg(2+)-binding residues include N192 and D206. Substrate-binding positions include N257 and 314 to 316; that span reads GIT.

The protein belongs to the succinate/malate CoA ligase beta subunit family. In terms of assembly, heterotetramer of two alpha and two beta subunits. Mg(2+) is required as a cofactor.

It carries out the reaction succinate + ATP + CoA = succinyl-CoA + ADP + phosphate. It catalyses the reaction GTP + succinate + CoA = succinyl-CoA + GDP + phosphate. It participates in carbohydrate metabolism; tricarboxylic acid cycle; succinate from succinyl-CoA (ligase route): step 1/1. Its function is as follows. Succinyl-CoA synthetase functions in the citric acid cycle (TCA), coupling the hydrolysis of succinyl-CoA to the synthesis of either ATP or GTP and thus represents the only step of substrate-level phosphorylation in the TCA. The beta subunit provides nucleotide specificity of the enzyme and binds the substrate succinate, while the binding sites for coenzyme A and phosphate are found in the alpha subunit. The protein is Succinate--CoA ligase [ADP-forming] subunit beta of Deinococcus deserti (strain DSM 17065 / CIP 109153 / LMG 22923 / VCD115).